Consider the following 828-residue polypeptide: Vacuolar transporter chaperone complex subunit 2 (828 aa).

The region spanning 1–146 (MLFGVKLANE…PKYPSVKSLL (146 aa)) is the SPX domain. The Cytoplasmic segment spans residues 1-693 (MLFGVKLANE…EAKVWLANER (693 aa)). Residues 127–134 (KIVKKHDK) are important for inositol polyphosphate binding. 7 positions are modified to phosphoserine: Ser-182, Ser-187, Ser-196, Ser-264, Ser-583, Ser-615, and Ser-616. The interval 580 to 636 (RRLSNLKEPQHQAAVPVSQEENERITSQGDLEADGSSDEETEQEPHSKRSKKVRRRK) is disordered. Over residues 610-621 (LEADGSSDEETE) the composition is skewed to acidic residues. Thr-620 bears the Phosphothreonine mark. The residue at position 626 (Ser-626) is a Phosphoserine. Residues 627–636 (KRSKKVRRRK) show a composition bias toward basic residues. Ser-657 bears the Phosphoserine mark. The chain crosses the membrane as a helical span at residues 694–716 (TFNRWLSVTSLLSVLTFSIYNSV). At 717–727 (KKAEYPTLANY) the chain is on the vacuolar side. A helical membrane pass occupies residues 728–748 (MAYVYFGLTIFCALWSYSIYM). The Cytoplasmic portion of the chain corresponds to 749 to 766 (KRVDIIQQRSGQHLDAPL). A helical membrane pass occupies residues 767 to 787 (GPVLVSIVLFVTLVVNFVMAF). The Vacuolar segment spans residues 788–828 (RNAAKSRQELQIQNLEVPERIPEVLRPLQNYLFKLMGPSSD).

The protein belongs to the VTC2/3 family. The VTC core complex is an integral membrane heterooligomer composed of the catalytic subunit VTC4 and the accessory subunits VTC1, VTC2 and VTC3. The complex exists in 2 different sub-complexes: VTC1-VTC2-VCT4 and VCT1-VTC3-VTC4. The VCT1-VTC3-VTC4 subcomplex is mostly found on the vacuolar membrane. The VTC1-VTC2-VCT4 subcomplex is observed in the cell periphery, probably ER and nuclear envelope, but localizes to the vacuole under phosphate starvation. Each subunit contains 3 transmembrane helices. VTC1 is a small membrane protein without hydrophilic domain. VTC2, VTC3 and VTC4 are related and have 2 hydrophilic domains that face the cytosol, an N-terminal SPX domain and the central core domain. The central core in VTC4 is the catalytic domain, with the essential catalytic lysine replaced by isoleucine and leucine in VTC2 and VTC3, respectively. The core complex associates with the accessory subunit VTC5. The complex interacts with the v-SNARE NYV1 and with the V(0) subunit of V-ATPase VPH1.

It localises to the vacuole membrane. The protein resides in the cytoplasm. Its subcellular location is the cell cortex. It is found in the endoplasmic reticulum membrane. The protein localises to the cytoplasmic vesicle. It localises to the autophagosome membrane. Its function is as follows. Accessory subunit of the vacuolar transporter chaperone (VTC) complex. The VTC complex acts as a vacuolar polyphosphate polymerase that catalyzes the synthesis of inorganic polyphosphate (polyP) via transfer of phosphate from ATP to a growing polyP chain, releasing ADP. VTC exposes its catalytic domain VTC4 to the cytosol, where the growing polyP chain winds through a tunnel-shaped pocket, integrating cytoplasmic polymer synthesis with polyP membrane translocation. The VTC complex carries 9 vacuolar transmembrane domains, which are likely to constitute the translocation channel into the organelle lumen. PolyP synthesis is tightly coupled to its transport into the vacuole lumen, in order to avoid otherwise toxic intermediates in the cytosol, and it depends on the proton gradient across the membrane, formed by V-ATPase. Binds inositol hexakisphosphate (Ins6P) and similar inositol polyphosphates, such as 5-diphospho-inositol pentakisphosphate (5-InsP7); these are important intracellular signaling molecules. Inositol polyphosphate binding promotes vacuolar polyphosphate synthesis. The VTC complex also plays a role in vacuolar membrane fusion. Required for SEC18/NSF activity in SNARE priming, membrane binding of LMA1 and V(0) trans-complex formation. This Saccharomyces cerevisiae (strain ATCC 204508 / S288c) (Baker's yeast) protein is Vacuolar transporter chaperone complex subunit 2.